Reading from the N-terminus, the 505-residue chain is MITLTGHTLTIEEMKRLLLEGEGVTACPTSMQKVAECREVVEKIVEDGKVVYGITTGFGKFSDVLIQKDDVKALQHNLIQSHACGIGDPFPEEVSRGMLILRANTMLKGVSGVRPLVVNMLLEFVNRKIHPVVPQQGSLGASGDLAPLSHLALVLLGEGEVFYKGKRVHAMVALTEEGLEPIELEAKEGLALINGTQAMTAQGVLSYIEAEATAYQAELIASMTIEGLQGIIDAFDENVHKARGYKEQVDVASRIRDILHDSKLTTKQGELRVQDAYSLRCIPQVHGASWQVLNYVKEKLEIEMNAATDNPLIFDGGEKVISGGNFHGQPIAFAMDFLKVGMAELANISERRIERLVNPQLNDLPPFLSPEPGLQSGAMIMQYAAASLVSENKTLAHPASVDSIPSSANQEDHVSMGTIASRHAHQIIQNARRVLSIEMICAMQAAEYRGIENMSTVTKSFYHQGRQQVPSITNDRIFSTDIENIAHWLKTNYSIKERLDVNAAL.

Positions 141 to 143 form a cross-link, 5-imidazolinone (Ala-Gly); that stretch reads ASG. Residue Ser142 is modified to 2,3-didehydroalanine (Ser).

It belongs to the PAL/histidase family. In terms of processing, contains an active site 4-methylidene-imidazol-5-one (MIO), which is formed autocatalytically by cyclization and dehydration of residues Ala-Ser-Gly.

Its subcellular location is the cytoplasm. The catalysed reaction is L-histidine = trans-urocanate + NH4(+). The protein operates within amino-acid degradation; L-histidine degradation into L-glutamate; N-formimidoyl-L-glutamate from L-histidine: step 1/3. This Bacillus cereus (strain G9842) protein is Histidine ammonia-lyase.